The sequence spans 798 residues: Phenylalanine--tRNA ligase beta subunit (798 aa).

In terms of domain architecture, tRNA-binding spans 39 to 148 (NPIFDGFLVG…EDIPIGKKIN (110 aa)). A B5 domain is found at 402-477 (SCSNKIKLYH…RIYNYNNIPL (76 aa)). Residues D455, D461, and D465 each contribute to the Mg(2+) site. In terms of domain architecture, FDX-ACB spans 704–797 (SKYPTSRRDI…LKKKFQVVLR (94 aa)).

Belongs to the phenylalanyl-tRNA synthetase beta subunit family. Type 1 subfamily. As to quaternary structure, tetramer of two alpha and two beta subunits. Mg(2+) is required as a cofactor.

The protein localises to the cytoplasm. It catalyses the reaction tRNA(Phe) + L-phenylalanine + ATP = L-phenylalanyl-tRNA(Phe) + AMP + diphosphate + H(+). In Buchnera aphidicola subsp. Schizaphis graminum (strain Sg), this protein is Phenylalanine--tRNA ligase beta subunit (pheT).